Consider the following 261-residue polypeptide: Global transcriptional regulator CodY (261 aa).

A GAF domain region spans residues 1–159; it reads MPNLLEKTRK…ASTVVGIQLL (159 aa). Residues 207-226 constitute a DNA-binding region (H-T-H motif); it reads ASVIADRIGITRSVIVNALR.

Belongs to the CodY family.

Its subcellular location is the cytoplasm. DNA-binding global transcriptional regulator which is involved in the adaptive response to starvation and acts by directly or indirectly controlling the expression of numerous genes in response to nutrient availability. During rapid exponential growth, CodY is highly active and represses genes whose products allow adaptation to nutrient depletion. This chain is Global transcriptional regulator CodY, found in Streptococcus agalactiae serotype III (strain NEM316).